Reading from the N-terminus, the 82-residue chain is UPF0729 protein C18orf32 homolog (82 aa).

Residues 1 to 37 form a necessary for its localzation to the endoplasmic reticulum and lipid droplets region; that stretch reads MVCIPCIVIPVLLWVYKKFLEPIVYPFISPIINRIWP. Positions 46–82 are disordered; the sequence is TSAKKEESNGTCKASGTSITNGSVSRGEEAVPDKKTD. Residues 54 to 69 are compositionally biased toward polar residues; that stretch reads NGTCKASGTSITNGSV. Residues 71-82 are compositionally biased toward basic and acidic residues; the sequence is RGEEAVPDKKTD.

This sequence belongs to the UPF0729 family.

The protein localises to the endoplasmic reticulum. It is found in the lipid droplet. This Xenopus tropicalis (Western clawed frog) protein is UPF0729 protein C18orf32 homolog.